Here is a 396-residue protein sequence, read N- to C-terminus: MTTPFKRIHLIVMDSVGIGEGPDAAAFNDEGSHTLKHTLEGFKQKLPHLEQLGLGNIAPLPVVSKVTHPGAFYTKLSEASVGKDTMTGHWEIMGLNIMQPFKVYPNGFPEELVKEIESMTGRKVVANRPASGTQIIDEWGEHQMKTGDLIVYTSADPVLQIAAHEDVIPLEELYEICEKVRELTKDPKYLIGRIIARPYVGEPGNFTRTSNRHDYALKPFGRTVMNSLKDNGYDVIAIGKINDIYDGEGVTEAIRTKNNMDGMDQLIEVVKKDFEGISFLNLVDFDALYGHRRDKEGYAQAIKDFDLRLPELMNHLREDDLVIITADHGNDPIAKGTDHTREYIPLLMFSPKIKDYHELSQDTTFSSIGVTIADNFNVELPKYGKSYLKEMGVEHQ.

Positions 14, 286, 291, 327, 328, and 339 each coordinate Mn(2+).

Belongs to the phosphopentomutase family. It depends on Mn(2+) as a cofactor.

Its subcellular location is the cytoplasm. The catalysed reaction is 2-deoxy-alpha-D-ribose 1-phosphate = 2-deoxy-D-ribose 5-phosphate. It carries out the reaction alpha-D-ribose 1-phosphate = D-ribose 5-phosphate. Its pathway is carbohydrate degradation; 2-deoxy-D-ribose 1-phosphate degradation; D-glyceraldehyde 3-phosphate and acetaldehyde from 2-deoxy-alpha-D-ribose 1-phosphate: step 1/2. Its function is as follows. Isomerase that catalyzes the conversion of deoxy-ribose 1-phosphate (dRib-1-P) and ribose 1-phosphate (Rib-1-P) to deoxy-ribose 5-phosphate (dRib-5-P) and ribose 5-phosphate (Rib-5-P), respectively. In Staphylococcus epidermidis (strain ATCC 35984 / DSM 28319 / BCRC 17069 / CCUG 31568 / BM 3577 / RP62A), this protein is Phosphopentomutase.